Consider the following 1522-residue polypeptide: Dicer-like protein 1 (1522 aa).

Acidic residues predominate over residues 1-12 (MTWAGDVEEQDD). The segment at 1 to 37 (MTWAGDVEEQDDYFSCSDVSTSGDRRKRAPQTVTQEE) is disordered. One can recognise a Helicase ATP-binding domain in the interval 76–258 (LFLRAKMQNT…EHVREAAREL (183 aa)). An ATP-binding site is contributed by 89–96 (LDTGTGKT). The DEAH box signature appears at 202–205 (DEAH). The 169-residue stretch at 408–576 (WLNLYYERTT…DVEQEKAELI (169 aa)) folds into the Helicase C-terminal domain. The 101-residue stretch at 600 to 700 (SLSILSHFVA…LPTISKYLPA (101 aa)) folds into the Dicer dsRNA-binding fold domain. The PAZ domain occupies 859–980 (PFWKWSPQSR…ICPEPLHISN (122 aa)). RNase III domains are found at residues 995–1166 (IIHR…MQHH) and 1222–1373 (AHKI…VDSE). 3 residues coordinate Mg(2+): E1262, D1359, and E1362. One can recognise a DRBM domain in the interval 1409 to 1478 (TRLSRLLSIN…SHAALEKLEG (70 aa)). The Zn(2+) site is built by C1421, H1449, C1490, and C1492.

The protein belongs to the helicase family. Dicer subfamily. Mg(2+) serves as cofactor. It depends on Mn(2+) as a cofactor.

In terms of biological role, dicer-like endonuclease involved in cleaving double-stranded RNA in the RNA interference (RNAi) pathway. Produces 21 to 25 bp dsRNAs (siRNAs) which target the selective destruction of homologous RNAs leading to sequence-specific suppression of gene expression, called post-transcriptional gene silencing (PTGS). Part of a broad host defense response against viral infection and transposons. The sequence is that of Dicer-like protein 1 (DCL1) from Phaeosphaeria nodorum (strain SN15 / ATCC MYA-4574 / FGSC 10173) (Glume blotch fungus).